We begin with the raw amino-acid sequence, 132 residues long: Small ribosomal subunit protein uS8 (132 aa).

This sequence belongs to the universal ribosomal protein uS8 family. As to quaternary structure, part of the 30S ribosomal subunit. Contacts proteins S5 and S12.

Functionally, one of the primary rRNA binding proteins, it binds directly to 16S rRNA central domain where it helps coordinate assembly of the platform of the 30S subunit. The protein is Small ribosomal subunit protein uS8 of Heliobacterium modesticaldum (strain ATCC 51547 / Ice1).